Here is a 322-residue protein sequence, read N- to C-terminus: Heat-inducible transcription repressor HrcA (322 aa).

Belongs to the HrcA family.

Negative regulator of class I heat shock genes (grpE-dnaK-dnaJ and groELS operons). Prevents heat-shock induction of these operons. This chain is Heat-inducible transcription repressor HrcA, found in Staphylococcus carnosus (strain TM300).